A 100-amino-acid polypeptide reads, in one-letter code: Omega-hexatoxin-Asp2a (100 aa).

The first 23 residues, 1–23 (MKFSKLSITLAVILTQAVFVLCG), serve as a signal peptide directing secretion. A propeptide spanning residues 24–55 (MKNEDFMEKGLESNELHDAIKKPVNSGKPDTE) is cleaved from the precursor. Disulfide bonds link C60–C73, C66–C79, and C72–C84.

It belongs to the neurotoxin 15 family. 02 (omega-actx) subfamily. Expressed by the venom gland.

The protein resides in the secreted. Its function is as follows. Potent inhibitor of insect, but not mammalian, voltage-gated calcium channels (Cav). In Atrax sp. (strain Illawarra) (Funnel-web spider), this protein is Omega-hexatoxin-Asp2a.